Here is a 351-residue protein sequence, read N- to C-terminus: MQPSIRSYLRTGPGYVYAAHSGTARETGRIACLASNENPFPPSEAAIAAGAAALATVNRYPDDRMTDLTEALKRLHGDHTFVVGNGMDGIIETVLRCFIGHGDRVVVSTPTFSFYGIAAAGQGAIVENIQRKEDFTVDIPAFTRACTGAKVAFLCTPNNPTGTVTTPAEVRKVLDGIGDCMLFLDNAYVDFARDDYRPLMGEYENLIIGRTMSKIFGLAGLRVGYAFIPAWLEPFYMKAATPFSGISSVSAAAAVAALADREHRERTLAHMLEWRERVRSAVRFPVLPSEANFLMIDVAPHTADDVVATLAGRGVLIRSCRSFPGLGDHYVRVSIGDAWENERFIEEINRI.

K214 bears the N6-(pyridoxal phosphate)lysine mark.

Belongs to the class-II pyridoxal-phosphate-dependent aminotransferase family. Histidinol-phosphate aminotransferase subfamily. Pyridoxal 5'-phosphate is required as a cofactor.

It carries out the reaction L-histidinol phosphate + 2-oxoglutarate = 3-(imidazol-4-yl)-2-oxopropyl phosphate + L-glutamate. The protein operates within amino-acid biosynthesis; L-histidine biosynthesis; L-histidine from 5-phospho-alpha-D-ribose 1-diphosphate: step 7/9. In Methanosphaerula palustris (strain ATCC BAA-1556 / DSM 19958 / E1-9c), this protein is Histidinol-phosphate aminotransferase.